We begin with the raw amino-acid sequence, 24 residues long: Erythromycin resistance leader peptide (24 aa).

A compositionally biased stretch (low complexity) spans 1-14; the sequence is MSMGIAARPPRAAL. The tract at residues 1–24 is disordered; it reads MSMGIAARPPRAALLPPPSVPRSR. Residues 15 to 24 are compositionally biased toward pro residues; it reads LPPPSVPRSR.

Functionally, this peptide is involved in the control mechanism of the synthesis of the macrolide-lincosamide-streptogramin B resistance protein. This chain is Erythromycin resistance leader peptide, found in Streptomyces fradiae (Streptomyces roseoflavus).